The following is a 254-amino-acid chain: Triosephosphate isomerase, cytosolic (254 aa).

2 residues coordinate substrate: asparagine 10 and lysine 12. Residue histidine 96 is the Electrophile of the active site. The active-site Proton acceptor is glutamate 166.

This sequence belongs to the triosephosphate isomerase family. Homodimer.

It is found in the cytoplasm. The enzyme catalyses D-glyceraldehyde 3-phosphate = dihydroxyacetone phosphate. The protein operates within carbohydrate biosynthesis; gluconeogenesis. Its pathway is carbohydrate degradation; glycolysis; D-glyceraldehyde 3-phosphate from glycerone phosphate: step 1/1. In Petunia hybrida (Petunia), this protein is Triosephosphate isomerase, cytosolic (TPIP1).